The chain runs to 294 residues: Lycopene elongase/hydratase (294 aa).

Transmembrane regions (helical) follow at residues Phe31–Gly51, Leu53–Leu73, Leu115–Met135, Gly160–Ala180, Ala182–Ile202, Thr222–Trp242, Val243–Val263, and Ala274–Gly294.

It belongs to the UbiA prenyltransferase family.

It localises to the cell membrane. The catalysed reaction is all-trans-lycopene + dimethylallyl diphosphate + H2O = dihydroisopentenyldehydrorhodopin + diphosphate. The enzyme catalyses isopentenyldehydrorhodopin + dimethylallyl diphosphate + H2O = dihydrobisanhydrobacterioruberin + diphosphate. It participates in carotenoid biosynthesis. In terms of biological role, involved in the biosynthesis of the acyclic C50 carotenoid bacterioruberin (BR). Acts as a bifunctional elongase/hydratase that catalyzes the elongation of lycopene by attaching a C(5) isoprene unit at C-2, as well as the hydroxylation of the previous end of the molecule. The enzyme acts at both ends of the substrate, and catalyzes the conversion of lycopene to the C(45) intermediate dihydroisopentenyldehydrorhodopin (DH-IDR) and the conversion of isopentenyldehydrorhodopin (IDR) to the C(50) carotenoid dihydrobisanhydrobacterioruberin (DH-BABR). Can also catalyze the conversion of lycopene to tetrahydrobisanhydrobacterioruberin (TH-BABR). The sequence is that of Lycopene elongase/hydratase from Haloarcula japonica (strain ATCC 49778 / DSM 6131 / JCM 7785 / NBRC 101032 / NCIMB 13157 / TR-1).